Reading from the N-terminus, the 249-residue chain is Urease accessory protein UreG (249 aa).

Residues 1-13 show a composition bias toward basic and acidic residues; it reads MHLGHEEFQRTDG. Positions 1-34 are disordered; sequence MHLGHEEFQRTDGRASTGPADAGPAGAGRAPRIG. The segment covering 18 to 33 has biased composition (low complexity); it reads GPADAGPAGAGRAPRI. 37 to 44 contacts GTP; the sequence is GPVGSGKT. Positions 229-249 are disordered; sequence PRGGSYDASDASNASQPLNRM. The span at 238-249 shows a compositional bias: polar residues; that stretch reads DASNASQPLNRM.

It belongs to the SIMIBI class G3E GTPase family. UreG subfamily. In terms of assembly, homodimer. UreD, UreF and UreG form a complex that acts as a GTP-hydrolysis-dependent molecular chaperone, activating the urease apoprotein by helping to assemble the nickel containing metallocenter of UreC. The UreE protein probably delivers the nickel.

The protein localises to the cytoplasm. Functionally, facilitates the functional incorporation of the urease nickel metallocenter. This process requires GTP hydrolysis, probably effectuated by UreG. This Frankia casuarinae (strain DSM 45818 / CECT 9043 / HFP020203 / CcI3) protein is Urease accessory protein UreG.